Here is a 42-residue protein sequence, read N- to C-terminus: Thymosin beta-10 (42 aa).

2 stretches are compositionally biased toward basic and acidic residues: residues 1 to 25 (MADKPDLGEINSFDKAKLKKTETQE) and 33 to 42 (ETIEQEKQAK). The disordered stretch occupies residues 1 to 42 (MADKPDLGEINSFDKAKLKKTETQEKNTLPTKETIEQEKQAK). Residue Ala-2 is modified to N-acetylalanine. Lys-4 is modified (N6-acetyllysine). Phosphoserine is present on Ser-12. Position 15 is an N6-acetyllysine (Lys-15). A phosphothreonine mark is found at Thr-21, Thr-23, and Thr-34. Lys-39 carries the N6-acetyllysine modification.

It belongs to the thymosin beta family. Distributed in numerous types of tissues, including thymus, spleen, lung, liver and muscle.

It localises to the cytoplasm. The protein resides in the cytoskeleton. Its function is as follows. Plays an important role in the organization of the cytoskeleton. Binds to and sequesters actin monomers (G actin) and therefore inhibits actin polymerization. This is Thymosin beta-10 (TMSB10) from Bos taurus (Bovine).